The sequence spans 255 residues: Bouquet formation protein 3 (255 aa).

Helical transmembrane passes span 13-33, 48-68, 72-94, 99-116, 132-152, 172-192, 205-225, and 235-255; these read IKVS…NYHL, IPYW…LLLQ, LGYG…YYLT, IAWA…ARCF, YSVS…LNYI, SLVA…GYVI, SLFL…SILF, and VVGA…ALSL.

It is found in the endoplasmic reticulum membrane. The protein localises to the nucleus inner membrane. Connects telomeres to the nuclear envelop (NE) during both vegetative growth and meiosis. This connection ensures clustering of telomeres to the spindle pole body (SPB) when cells enter meiotic prophase. This is Bouquet formation protein 3 (bqt3) from Schizosaccharomyces pombe (strain 972 / ATCC 24843) (Fission yeast).